The chain runs to 490 residues: UDP-N-acetylmuramyl-tripeptide synthetase (490 aa).

113-119 (GTDGKTT) contacts ATP. UDP-N-acetyl-alpha-D-muramoyl-L-alanyl-D-glutamate is bound by residues 158–159 (TT), S185, and R193. K225 carries the post-translational modification N6-carboxylysine.

It belongs to the MurCDEF family. MurE subfamily. Post-translationally, carboxylation is probably crucial for Mg(2+) binding and, consequently, for the gamma-phosphate positioning of ATP.

The protein resides in the cytoplasm. It functions in the pathway cell wall biogenesis; peptidoglycan biosynthesis. Functionally, catalyzes the addition of an amino acid to the nucleotide precursor UDP-N-acetylmuramoyl-L-alanyl-D-glutamate (UMAG) in the biosynthesis of bacterial cell-wall peptidoglycan. The sequence is that of UDP-N-acetylmuramyl-tripeptide synthetase from Deinococcus radiodurans (strain ATCC 13939 / DSM 20539 / JCM 16871 / CCUG 27074 / LMG 4051 / NBRC 15346 / NCIMB 9279 / VKM B-1422 / R1).